A 463-amino-acid polypeptide reads, in one-letter code: Bifunctional protein HldE (463 aa).

The interval 1–315 (MKKILVIGDL…LILNQTHPKI (315 aa)) is ribokinase. 191–194 (NRAE) contacts ATP. Residue Asp-260 is part of the active site. A cytidylyltransferase region spans residues 334–463 (FTNGCFDLLH…IEKIKRTHND (130 aa)).

In the N-terminal section; belongs to the carbohydrate kinase PfkB family. It in the C-terminal section; belongs to the cytidylyltransferase family. Homodimer.

It catalyses the reaction D-glycero-beta-D-manno-heptose 7-phosphate + ATP = D-glycero-beta-D-manno-heptose 1,7-bisphosphate + ADP + H(+). The catalysed reaction is D-glycero-beta-D-manno-heptose 1-phosphate + ATP + H(+) = ADP-D-glycero-beta-D-manno-heptose + diphosphate. The protein operates within nucleotide-sugar biosynthesis; ADP-L-glycero-beta-D-manno-heptose biosynthesis; ADP-L-glycero-beta-D-manno-heptose from D-glycero-beta-D-manno-heptose 7-phosphate: step 1/4. Its pathway is nucleotide-sugar biosynthesis; ADP-L-glycero-beta-D-manno-heptose biosynthesis; ADP-L-glycero-beta-D-manno-heptose from D-glycero-beta-D-manno-heptose 7-phosphate: step 3/4. Its function is as follows. Catalyzes the phosphorylation of D-glycero-D-manno-heptose 7-phosphate at the C-1 position to selectively form D-glycero-beta-D-manno-heptose-1,7-bisphosphate. Catalyzes the ADP transfer from ATP to D-glycero-beta-D-manno-heptose 1-phosphate, yielding ADP-D-glycero-beta-D-manno-heptose. This is Bifunctional protein HldE from Helicobacter pylori (strain HPAG1).